A 225-amino-acid chain; its full sequence is 7-cyano-7-deazaguanine synthase (225 aa).

10 to 20 (LSGGIDSATAA) provides a ligand contact to ATP. Residues Cys-191, Cys-199, Cys-202, and Cys-205 each coordinate Zn(2+).

It belongs to the QueC family. Zn(2+) is required as a cofactor.

It carries out the reaction 7-carboxy-7-deazaguanine + NH4(+) + ATP = 7-cyano-7-deazaguanine + ADP + phosphate + H2O + H(+). It functions in the pathway purine metabolism; 7-cyano-7-deazaguanine biosynthesis. Functionally, catalyzes the ATP-dependent conversion of 7-carboxy-7-deazaguanine (CDG) to 7-cyano-7-deazaguanine (preQ(0)). The sequence is that of 7-cyano-7-deazaguanine synthase from Prochlorococcus marinus (strain NATL1A).